Here is an 863-residue protein sequence, read N- to C-terminus: Glycogen phosphorylase (863 aa).

N6-(pyridoxal phosphate)lysine is present on lysine 618.

It belongs to the glycogen phosphorylase family. Requires pyridoxal 5'-phosphate as cofactor.

The enzyme catalyses [(1-&gt;4)-alpha-D-glucosyl](n) + phosphate = [(1-&gt;4)-alpha-D-glucosyl](n-1) + alpha-D-glucose 1-phosphate. In terms of biological role, phosphorylase is an important allosteric enzyme in carbohydrate metabolism. Enzymes from different sources differ in their regulatory mechanisms and in their natural substrates. However, all known phosphorylases share catalytic and structural properties. This is Glycogen phosphorylase (glgP) from Mycobacterium bovis (strain ATCC BAA-935 / AF2122/97).